The following is a 249-amino-acid chain: uncharacterized protein (249 aa).

In terms of domain architecture, S4 RNA-binding spans 4 to 71; it reads VRINKFLSEA…RKRYIILNKP (68 aa). Asp-106 functions as the Nucleophile in the catalytic mechanism.

It belongs to the pseudouridine synthase RsuA family.

The catalysed reaction is a uridine in RNA = a pseudouridine in RNA. This is an uncharacterized protein from Aquifex aeolicus (strain VF5).